Consider the following 472-residue polypeptide: 6-phosphogluconate dehydrogenase, decarboxylating (472 aa).

NADP(+)-binding positions include 10 to 15 (GMAVMG), 33 to 35 (NRT), 74 to 76 (VQA), and asparagine 102. Substrate is bound by residues asparagine 102 and 128–130 (SGG). Residue lysine 184 is the Proton acceptor of the active site. 187–188 (HN) provides a ligand contact to substrate. The active-site Proton donor is the glutamate 191. Positions 192, 262, 289, 447, and 453 each coordinate substrate.

The protein belongs to the 6-phosphogluconate dehydrogenase family. In terms of assembly, homodimer.

It catalyses the reaction 6-phospho-D-gluconate + NADP(+) = D-ribulose 5-phosphate + CO2 + NADPH. It functions in the pathway carbohydrate degradation; pentose phosphate pathway; D-ribulose 5-phosphate from D-glucose 6-phosphate (oxidative stage): step 3/3. Catalyzes the oxidative decarboxylation of 6-phosphogluconate to ribulose 5-phosphate and CO(2), with concomitant reduction of NADP to NADPH. This is 6-phosphogluconate dehydrogenase, decarboxylating (gnd) from Lactococcus lactis subsp. cremoris (strain MG1363).